The chain runs to 168 residues: Probable chemoreceptor glutamine deamidase CheD 2 (168 aa).

The protein belongs to the CheD family.

It catalyses the reaction L-glutaminyl-[protein] + H2O = L-glutamyl-[protein] + NH4(+). Probably deamidates glutamine residues to glutamate on methyl-accepting chemotaxis receptors (MCPs), playing an important role in chemotaxis. This Leptospira interrogans serogroup Icterohaemorrhagiae serovar copenhageni (strain Fiocruz L1-130) protein is Probable chemoreceptor glutamine deamidase CheD 2.